The chain runs to 391 residues: Formate-dependent phosphoribosylglycinamide formyltransferase (391 aa).

N(1)-(5-phospho-beta-D-ribosyl)glycinamide is bound by residues 18–19 (EL) and Glu-78. ATP-binding positions include Arg-110, Lys-151, 156-161 (SSGKGQ), 191-194 (EEFI), and Glu-199. The region spanning 115 to 305 (DLASKDLKIK…EFELHLRAFL (191 aa)) is the ATP-grasp domain. Residues Glu-264 and Glu-276 each coordinate Mg(2+). N(1)-(5-phospho-beta-D-ribosyl)glycinamide is bound by residues Asp-283, Lys-353, and 360-361 (RR).

It belongs to the PurK/PurT family. In terms of assembly, homodimer.

It carries out the reaction N(1)-(5-phospho-beta-D-ribosyl)glycinamide + formate + ATP = N(2)-formyl-N(1)-(5-phospho-beta-D-ribosyl)glycinamide + ADP + phosphate + H(+). It functions in the pathway purine metabolism; IMP biosynthesis via de novo pathway; N(2)-formyl-N(1)-(5-phospho-D-ribosyl)glycinamide from N(1)-(5-phospho-D-ribosyl)glycinamide (formate route): step 1/1. Functionally, involved in the de novo purine biosynthesis. Catalyzes the transfer of formate to 5-phospho-ribosyl-glycinamide (GAR), producing 5-phospho-ribosyl-N-formylglycinamide (FGAR). Formate is provided by PurU via hydrolysis of 10-formyl-tetrahydrofolate. The protein is Formate-dependent phosphoribosylglycinamide formyltransferase of Prochlorococcus marinus (strain AS9601).